The chain runs to 545 residues: Ribulokinase (545 aa).

The protein belongs to the ribulokinase family.

The enzyme catalyses D-ribulose + ATP = D-ribulose 5-phosphate + ADP + H(+). It carries out the reaction L-ribulose + ATP = L-ribulose 5-phosphate + ADP + H(+). Its pathway is carbohydrate degradation; L-arabinose degradation via L-ribulose; D-xylulose 5-phosphate from L-arabinose (bacterial route): step 2/3. This is Ribulokinase from Staphylococcus aureus (strain bovine RF122 / ET3-1).